A 497-amino-acid chain; its full sequence is Anthranilate synthase component 1 (497 aa).

Residues Ser-49 and 271–273 (PYL) each bind L-tryptophan. 312–313 (GT) lines the chorismate pocket. A Mg(2+)-binding site is contributed by Glu-339. Chorismate contacts are provided by residues Arg-447, 461–463 (GAG), and Gly-463. Glu-476 contacts Mg(2+).

This sequence belongs to the anthranilate synthase component I family. As to quaternary structure, heterotetramer consisting of two non-identical subunits: a beta subunit (TrpG) and a large alpha subunit (TrpE). The cofactor is Mg(2+).

It catalyses the reaction chorismate + L-glutamine = anthranilate + pyruvate + L-glutamate + H(+). It participates in amino-acid biosynthesis; L-tryptophan biosynthesis; L-tryptophan from chorismate: step 1/5. Feedback inhibited by tryptophan. Its function is as follows. Part of a heterotetrameric complex that catalyzes the two-step biosynthesis of anthranilate, an intermediate in the biosynthesis of L-tryptophan. In the first step, the glutamine-binding beta subunit (TrpG) of anthranilate synthase (AS) provides the glutamine amidotransferase activity which generates ammonia as a substrate that, along with chorismate, is used in the second step, catalyzed by the large alpha subunit of AS (TrpE) to produce anthranilate. In the absence of TrpG, TrpE can synthesize anthranilate directly from chorismate and high concentrations of ammonia. This is Anthranilate synthase component 1 (trpE) from Acinetobacter calcoaceticus.